We begin with the raw amino-acid sequence, 2194 residues long: Nucleosome-remodeling factor subunit NURF301-like (2194 aa).

Residues Met-1–His-12 are compositionally biased toward basic residues. The disordered stretch occupies residues Met-1–Phe-137. Over residues Ala-60–Ser-79 the composition is skewed to basic and acidic residues. Polar residues predominate over residues Val-80–Thr-93. The segment covering Ser-94 to Leu-112 has biased composition (basic residues). Over residues Asp-118–Phe-137 the composition is skewed to acidic residues. DDT domains are found at residues Thr-196–Glu-256 and Val-341–Arg-396. The PHD-type 1 zinc finger occupies Asp-347–Asn-392. Disordered stretches follow at residues Glu-1091–Asn-1122, Ala-1158–Asn-1255, Thr-1413–Ser-1433, Met-1657–Ser-1701, and Glu-1834–Gly-1888. Residues Arg-1151 to Ser-1187 adopt a coiled-coil conformation. The span at Ala-1158–Arg-1179 shows a compositional bias: basic and acidic residues. Over residues Thr-1665–Thr-1684 the composition is skewed to polar residues. Positions Lys-1852–Glu-1861 are enriched in basic and acidic residues. DDT domains lie at Ala-1883 to Arg-1953 and Ile-1948 to Tyr-2014. PHD-type zinc fingers lie at residues Ile-1899 to Glu-1950 and Ala-1959 to Glu-2010. A Bromo domain is found at Gln-2030 to Val-2134.

It belongs to the BPTF family. Part of a nucleosome remodeling factor-like (NURF-like) complex containing nurf-1 and isw-1.

The protein resides in the nucleus. Histone-binding component of a NURF-like (nucleosome remodeling factor-like) complex, which would catalyze ATP-dependent nucleosome sliding and facilitate transcription of chromatin. Involved in vulval cell fates. The sequence is that of Nucleosome-remodeling factor subunit NURF301-like (nurf-1) from Caenorhabditis elegans.